The following is a 206-amino-acid chain: Large ribosomal subunit protein uL4 (206 aa).

Residues 65–85 (KQKGSGGARHGDRKAPQFRGG) form a disordered region.

The protein belongs to the universal ribosomal protein uL4 family. In terms of assembly, part of the 50S ribosomal subunit.

Its function is as follows. One of the primary rRNA binding proteins, this protein initially binds near the 5'-end of the 23S rRNA. It is important during the early stages of 50S assembly. It makes multiple contacts with different domains of the 23S rRNA in the assembled 50S subunit and ribosome. In terms of biological role, forms part of the polypeptide exit tunnel. The polypeptide is Large ribosomal subunit protein uL4 (Parvibaculum lavamentivorans (strain DS-1 / DSM 13023 / NCIMB 13966)).